The primary structure comprises 156 residues: Transcriptional regulator MraZ (156 aa).

2 consecutive SpoVT-AbrB domains span residues 5-51 (TFEK…GKAL) and 80-123 (MAKL…SREA).

The protein belongs to the MraZ family. In terms of assembly, forms oligomers.

Its subcellular location is the cytoplasm. It localises to the nucleoid. This is Transcriptional regulator MraZ from Caulobacter vibrioides (strain ATCC 19089 / CIP 103742 / CB 15) (Caulobacter crescentus).